Reading from the N-terminus, the 1883-residue chain is Transmembrane protein 131 (1883 aa).

A signal peptide spans methionine 1–glycine 22. At alanine 23–glutamate 1117 the chain is on the lumenal side. The segment at arginine 109 to phenylalanine 283 is papD-L domain. The N-linked (GlcNAc...) asparagine glycan is linked to asparagine 300. Serine 803 is subject to Phosphoserine. A helical transmembrane segment spans residues leucine 1118–threonine 1138. Over alanine 1139–asparagine 1883 the chain is Cytoplasmic. Disordered regions lie at residues glycine 1198–tyrosine 1580, leucine 1593–asparagine 1656, proline 1670–asparagine 1712, tryptophan 1766–threonine 1789, and methionine 1832–proline 1858. Low complexity predominate over residues alanine 1237–serine 1261. A compositionally biased stretch (pro residues) spans proline 1302 to proline 1316. 2 positions are modified to phosphoserine: serine 1322 and serine 1342. Composition is skewed to basic and acidic residues over residues serine 1330–glutamate 1343 and alanine 1353–proline 1364. Serine 1375 carries the phosphoserine modification. Residues serine 1380–proline 1394 show a composition bias toward basic residues. Residues lysine 1395–leucine 1417 are compositionally biased toward basic and acidic residues. The span at serine 1423–threonine 1434 shows a compositional bias: low complexity. Residues proline 1436 to glutamate 1458 are compositionally biased toward basic and acidic residues. Polar residues-rich tracts occupy residues alanine 1510 to threonine 1526 and proline 1542 to serine 1553. The span at proline 1602–proline 1611 shows a compositional bias: pro residues. Over residues serine 1619–serine 1630 the composition is skewed to low complexity. A compositionally biased stretch (polar residues) spans valine 1678–glycine 1690. 2 stretches are compositionally biased toward low complexity: residues proline 1773 to proline 1784 and serine 1837 to alanine 1849. 2 positions are modified to phosphoserine: serine 1863 and serine 1871.

Belongs to the TMEM131 family. In terms of assembly, interacts (via PapD-L domain) with COL1A2 (via C-terminus); the interaction is direct, may occur with other collagen proteins, and is involved in assembly and TRAPPIII ER-to-Golgi transport complex-dependent secretion of collagen. Interacts (via C-terminus) with TRAPPC8 (via C-terminus); the interaction is direct.

It is found in the membrane. Its function is as follows. Collagen binding transmembrane protein involved in collagen secretion by recruiting the ER-to-Golgi transport complex TRAPPIII. May play a role in the immune response to viral infection. This is Transmembrane protein 131 from Homo sapiens (Human).